A 607-amino-acid chain; its full sequence is Dopamine receptor 3 (607 aa).

At 1-23 the chain is on the extracellular side; that stretch reads MLAGQHHVTDIESPLMVVLWRVA. Residues 24-44 form a helical membrane-spanning segment; that stretch reads AGVFLPLVPTMAVFGNVLVIM. Topologically, residues 45 to 58 are cytoplasmic; that stretch reads SVFRERSLQTVTNM. The chain crosses the membrane as a helical span at residues 59–79; the sequence is LIVSLAVSDFMVAIGVMSFGV. Residues 80–96 are Extracellular-facing; that stretch reads YYEWNDFKWGLGSFFCH. Cys-95 and Cys-173 are disulfide-bonded. Residues 97-117 form a helical membrane-spanning segment; the sequence is VYQALDVACSTASILNLLAIS. At 118-141 the chain is on the cytoplasmic side; sequence LDRYIAIGHPISYAQYGARGGRAM. The helical transmembrane segment at 142–162 threads the bilayer; the sequence is ISITIVWGVSVAVALPLLLGV. Residues 163 to 182 are Extracellular-facing; sequence NPMEENDLQECELANPYFNM. The chain crosses the membrane as a helical span at residues 183–203; sequence ISSIFSFFIPCIAMIILYTII. Over 204–523 the chain is Cytoplasmic; it reads FRRLRQRERA…TKQMRREHKA (320 aa). Residues 402–435 are disordered; the sequence is VPSIQDEKKLSQKSNDLPFSHQNGTHKQKLLPNP. The span at 413–424 shows a compositional bias: polar residues; sequence QKSNDLPFSHQN. Residues 524 to 544 traverse the membrane as a helical segment; that stretch reads TVTLAVVLAVFLFCWLPFFVL. Topologically, residues 545–558 are extracellular; it reads HLSNSICLIIDENS. A helical membrane pass occupies residues 559 to 579; the sequence is ACVGFLPLYLATWLGYLNSSL. Over 580-607 the chain is Cytoplasmic; the sequence is NPLIYTVFDQRFRNAFRNILSCGIFKKR.

The protein belongs to the G-protein coupled receptor 1 family. In terms of tissue distribution, expressed in the neurons of the head, ventral cord and tail with weak expression observed in body wall muscles and PVD neurons. In the ventral cord, expressed strongly in GABAergic neurons with weaker expression in cholinergic motor neurons. Expressed in cholinergic SIA neurons and octopaminergic RIC neurons. In males, expressed in the dorsal and ventral spicule protractor and retractor muscles, and the sensory post-cloacal sensilla B (PCB) neuron. Expressed in the head acetylcholine neurons. Expressed in the AVA, AVB, AVD and AVE command interneurons. Expressed in premotor interneurons.

The protein localises to the cell membrane. Its function is as follows. G-protein coupled receptor which binds to the neurotransmitter dopamine with high affinity leading to the activation of an associated G-protein and downstream signaling pathways. Couples to G-proteins to inhibit adenylate cyclase (AC) activity and cAMP production. Antagonizes the D1-like dopamine receptor dop-1 to negatively regulate the rate of locomotion. Negatively regulates locomotion through the activation of goa-1 subunit proteins which inactivates the unc-77/nca-1 and nca-2 ion-channels in the command interneurons. Inhibits early-stage swimming by modulating the unc-77/nca-1 and nca-2 ion channels of premotor interneurons. In GABAergic, RIC, and SIA neurons, antagonizes the function of dop-1 to play a role in behavioral plasticity and regulate the decision-making process when conflicting alternatives are present. Antagonizes octopamine signaling in response to food by promoting the dopamine-mediated suppression of crh-1/CREB1 transcription factor activation in cholinergic SIA neurons. This is most likely in association with the G(o)-alpha G-protein subunit goa-1. Promotes male mating behavior by antagonizing acetylcholine signaling to control the protrusion of copulatory spicules from the tail of males during hermaphrodite vulval location. Under mitochondria stress, plays a role in bacterial preference, resulting in learned avoidance behavior. The polypeptide is Dopamine receptor 3 (Caenorhabditis elegans).